The sequence spans 391 residues: Probable sugar efflux transporter (391 aa).

12 helical membrane passes run 16 to 36 (VFVF…PVAL), 51 to 71 (VGLM…PLML), 82 to 102 (LLFL…AWNF), 110 to 130 (MGIA…VIRV), 138 to 158 (QALG…LPLG), 170 to 190 (TFGV…KLLP), 210 to 230 (PLLV…FTTY), 247 to 267 (ITTL…FLFG), 277 to 297 (FIAF…VFKN), 300 to 320 (WVIF…TIAL), 338 to 358 (IFSG…SIVI), and 361 to 381 (LGLE…LFWL).

The protein belongs to the major facilitator superfamily. SotB (TC 2.A.1.2) family.

The protein localises to the cell inner membrane. Involved in the efflux of sugars. The physiological role may be the reduction of the intracellular concentration of toxic sugars or sugar metabolites. The chain is Probable sugar efflux transporter from Helicobacter pylori (strain J99 / ATCC 700824) (Campylobacter pylori J99).